The primary structure comprises 368 residues: MEITNVMEYEKIAKEKLPKMVYDYYASGAEDQWTLQENRNAFSRILFRPRILIDVSKIDVSTTVLGFNISMPIMIAPTAMQKMAHPDGELATARATSAAGTIMTLSSWATCSVEEVASTGPGIRFFQLYVYKDRNVVIQLVKRAEEAGFKAIALTVDTPRLGRRESDIKNRFALPRGLTLKNFEGLDLGKIDKTNDSGLASYVAGQVDQSLSWKDIKWLQSITSLPILVKGVITAEDARIAVEYGAAGIIVSNHGARQLDYVPATIVALEEVVKAVEGRIPVFLDGGVRRGTDVFKALALGASGVFVGRPSLFSLAADGEAGVRKMLQMLRDEFELTMALSGCRSLREISRTHIKTDWDTPHYLSAKL.

Met1 carries the N-acetylmethionine modification. In terms of domain architecture, FMN hydroxy acid dehydrogenase spans 1–359 (MEITNVMEYE…SRTHIKTDWD (359 aa)). Tyr24 lines the glyoxylate pocket. FMN-binding positions include 77–79 (PTA), Ser106, 127–129 (QLY), and Thr155. A glyoxylate-binding site is contributed by Tyr129. Arg164 contacts glyoxylate. 2 residues coordinate FMN: Lys230 and Ser252. 2 residues coordinate glyoxylate: His254 and Arg257. Catalysis depends on His254, which acts as the Proton acceptor. FMN is bound by residues 285–289 (DGGVR) and 308–309 (GR).

It belongs to the FMN-dependent alpha-hydroxy acid dehydrogenase family. In terms of assembly, homotetramer. The cofactor is FMN.

It is found in the peroxisome. The catalysed reaction is glycolate + O2 = glyoxylate + H2O2. It functions in the pathway photosynthesis; photorespiration; glycine from 2-phosphoglycolate: step 2/3. Its function is as follows. Catalyzes the oxidation of glycolate to glyoxylate, with a reduction of O2 to H2O2. Is a key enzyme in photorespiration in green plants. In Arabidopsis thaliana (Mouse-ear cress), this protein is Glycolate oxidase 3 (GLO5).